A 422-amino-acid polypeptide reads, in one-letter code: Serine protease HTRA2, mitochondrial (422 aa).

The N-terminal 17 residues, 1–17 (MALRGSHRLEVIFKRCI), are a transit peptide targeting the mitochondrion. Residues 18-74 (ASPVLHSQAGNRRSSQLAIKGVDPNSNGNSGQYQQNGEHKEKGWRRLVRFFVPFSLG) constitute a propeptide that is removed on maturation. Residues 28–55 (NRRSSQLAIKGVDPNSNGNSGQYQQNGE) are disordered. A compositionally biased stretch (low complexity) spans 42-53 (NSNGNSGQYQQN). The chain crosses the membrane as a helical span at residues 64–82 (LVRFFVPFSLGAAVSAAII). 2 consecutive short sequence motifs (IAP-binding) follow at residues 75–78 (AAVS) and 94–97 (SKMT). Residues 139–302 (SNGSGFIIEQ…IPIDYVKVFL (164 aa)) form a serine protease region. Residues histidine 157, aspartate 189, and serine 266 each act as charge relay system in the active site. One can recognise a PDZ domain in the interval 325–410 (MGITMLTLTP…TLDIVILRGV (86 aa)).

It belongs to the peptidase S1C family. Interacts with th/DIAP1 (via BIR 2 domain).

Its subcellular location is the mitochondrion intermembrane space. The protein localises to the mitochondrion membrane. The enzyme catalyses Cleavage of non-polar aliphatic amino-acids at the P1 position, with a preference for Val, Ile and Met. At the P2 and P3 positions, Arg is selected most strongly with a secondary preference for other hydrophilic residues.. In terms of biological role, serine protease that shows proteolytic activity against a non-specific substrate beta-casein. Promotes or induces cell death either by direct binding to and inhibition of BIRC proteins (also called inhibitor of apoptosis proteins, IAPs), leading to an increase in caspase activity, or by a BIRC inhibition-independent, caspase-independent and serine protease activity-dependent mechanism. Can antagonize antiapoptotic activity of th/Diap1 by directly inducing the degradation of th/Diap1. The polypeptide is Serine protease HTRA2, mitochondrial (Drosophila sechellia (Fruit fly)).